The primary structure comprises 535 residues: Dimethylaniline monooxygenase [N-oxide-forming] 2 (535 aa).

An N-acetylalanine modification is found at Ala-2. FAD contacts are provided by residues 9-13 (GAGVS), Glu-32, 40-41 (LW), and 61-62 (NT). NADP(+) contacts are provided by residues 60-61 (TN) and 195-198 (SASD). Lys-492 is covalently cross-linked (Glycyl lysine isopeptide (Lys-Gly) (interchain with G-Cter in SUMO)). Residues 510-530 (FPVSFLLKFLGLFALVLAFLF) form a helical membrane-spanning segment.

It belongs to the FMO family. The cofactor is FAD. It depends on Mg(2+) as a cofactor. As to expression, lung.

The protein localises to the microsome membrane. The protein resides in the endoplasmic reticulum membrane. It catalyses the reaction N,N-dimethylaniline + NADPH + O2 + H(+) = N,N-dimethylaniline N-oxide + NADP(+) + H2O. In terms of biological role, catalyzes the oxidative metabolism of numerous xenobiotics, including mainly therapeutic drugs and insecticides that contain a soft nucleophile, most commonly nitrogen and sulfur and participates to their bioactivation. Most drug substrates are tertiary amines such as prochlorperazine and trifluoperazine which are N-oxygenated to form the N-oxide, or sulfides such as thiourea and ethionamide, which are S-oxygenated to the sulfoxide. Others include primary alkylamines such as N-dodecylamine and octan-1-amine that are sequentially monooxygenated to oximes through intermediate hydroxylamines and both steps are NADPH- and oxygen-dependent. Also metabolized N-Deacetyl ketoconazole (DAK) to N-hydroxy-DAK and appears to further metabolizes N-hydroxy-DAK to two others metabolites. Also catalyzes S-oxygenation of the thioether-containing organophosphate insecticides, phorate and disulfoton. In Oryctolagus cuniculus (Rabbit), this protein is Dimethylaniline monooxygenase [N-oxide-forming] 2.